The sequence spans 486 residues: Corytuberine synthase (486 aa).

Residues 6–21 (ALFSLIPVILVFILLL) form a helical membrane-spanning segment. C428 is a binding site for heme.

Belongs to the cytochrome P450 family. Requires heme as cofactor.

It localises to the endoplasmic reticulum membrane. It carries out the reaction (S)-reticuline + reduced [NADPH--hemoprotein reductase] + O2 = (S)-corytuberine + oxidized [NADPH--hemoprotein reductase] + 2 H2O + 2 H(+). Inhibited by ketoconazole. In terms of biological role, cytochrome P450 that catalyzes an intramolecular C-C phenol coupling of (S)-reticuline in magnoflorine biosynthesis. Catalyzes the formation of (S)-corytuberine from (S)-reticuline, and also, with a lover efficiency, the 4'-O-demethylation of codamine to produce orientaline, and subsequent C-C-phenol coupling of orientaline. Can also use (R,S)-norreticuline, (R,S)-orientaline, (S)-N-methylcoclaurine and (S)-coclaurine as substrates, but not (R,S)-6-O-methyllaudanosoline, (R,S)-6-O-methylnorlaudanosoline, (R,S)-laudanine, (R,S)-norlaudanine, (R,S)-4'-O-methyllaudanosoline, (R,S)-pseudocodamine, (R,S)-norpseudocodamine, (R,S)-laudanosine, (R,S)-norlaudanosine, (R,S)-laudanosoline or (R,S)-norlaudanosoline. The polypeptide is Corytuberine synthase (Coptis japonica (Japanese goldthread)).